We begin with the raw amino-acid sequence, 409 residues long: Peptidase T (409 aa).

His80 contributes to the Zn(2+) binding site. Residue Asp82 is part of the active site. Asp143 provides a ligand contact to Zn(2+). Glu177 functions as the Proton acceptor in the catalytic mechanism. Residues Glu178, Asp200, and His382 each coordinate Zn(2+).

The protein belongs to the peptidase M20B family. Zn(2+) serves as cofactor.

It is found in the cytoplasm. The catalysed reaction is Release of the N-terminal residue from a tripeptide.. Its function is as follows. Cleaves the N-terminal amino acid of tripeptides. This Enterococcus faecalis (strain ATCC 700802 / V583) protein is Peptidase T.